A 362-amino-acid chain; its full sequence is 3-isopropylmalate dehydrogenase (362 aa).

77–88 (GPKWGTGAVRPE) is a binding site for NAD(+). Residues Arg95, Arg105, Arg134, and Asp223 each coordinate substrate. 3 residues coordinate Mg(2+): Asp223, Asp248, and Asp252. An NAD(+)-binding site is contributed by 287-298 (GSAPDLPPNKVN).

This sequence belongs to the isocitrate and isopropylmalate dehydrogenases family. In terms of assembly, homodimer. It depends on Mg(2+) as a cofactor. Mn(2+) is required as a cofactor.

Its subcellular location is the cytoplasm. It catalyses the reaction (2R,3S)-3-isopropylmalate + NAD(+) = 4-methyl-2-oxopentanoate + CO2 + NADH. It functions in the pathway amino-acid biosynthesis; L-leucine biosynthesis; L-leucine from 3-methyl-2-oxobutanoate: step 3/4. Catalyzes the oxidation of 3-carboxy-2-hydroxy-4-methylpentanoate (3-isopropylmalate) to 3-carboxy-4-methyl-2-oxopentanoate. The product decarboxylates to 4-methyl-2 oxopentanoate. This Blastobotrys adeninivorans (Yeast) protein is 3-isopropylmalate dehydrogenase (LEU2).